The sequence spans 252 residues: Triosephosphate isomerase (252 aa).

10–12 is a substrate binding site; that stretch reads NWK. His96 serves as the catalytic Electrophile. The Proton acceptor role is filled by Glu168. Substrate is bound by residues Gly174, Ser214, and 235-236; that span reads GG.

The protein belongs to the triosephosphate isomerase family. Homodimer.

Its subcellular location is the cytoplasm. The enzyme catalyses D-glyceraldehyde 3-phosphate = dihydroxyacetone phosphate. It functions in the pathway carbohydrate biosynthesis; gluconeogenesis. It participates in carbohydrate degradation; glycolysis; D-glyceraldehyde 3-phosphate from glycerone phosphate: step 1/1. Involved in the gluconeogenesis. Catalyzes stereospecifically the conversion of dihydroxyacetone phosphate (DHAP) to D-glyceraldehyde-3-phosphate (G3P). The polypeptide is Triosephosphate isomerase (Streptococcus pyogenes serotype M6 (strain ATCC BAA-946 / MGAS10394)).